Reading from the N-terminus, the 546-residue chain is CTP synthase (546 aa).

The amidoligase domain stretch occupies residues 1-269 (MNPNTKIIFV…DAKLVELLNL (269 aa)). Position 16 (Ser16) interacts with CTP. A UTP-binding site is contributed by Ser16. Residues 17–22 (SLGKGV) and Asp74 contribute to the ATP site. 2 residues coordinate Mg(2+): Asp74 and Glu143. CTP contacts are provided by residues 150–152 (DIE), 190–195 (KTKPTQ), and Lys226. UTP is bound by residues 190 to 195 (KTKPTQ) and Lys226. One can recognise a Glutamine amidotransferase type-1 domain in the interval 294 to 546 (TIAMVGKYVS…IHAAVEKSNK (253 aa)). Residue Gly356 coordinates L-glutamine. Cys383 serves as the catalytic Nucleophile; for glutamine hydrolysis. Residues 384 to 387 (LGMQ), Glu407, and Arg474 contribute to the L-glutamine site. Active-site residues include His519 and Glu521.

It belongs to the CTP synthase family. As to quaternary structure, homotetramer.

It catalyses the reaction UTP + L-glutamine + ATP + H2O = CTP + L-glutamate + ADP + phosphate + 2 H(+). The enzyme catalyses L-glutamine + H2O = L-glutamate + NH4(+). It carries out the reaction UTP + NH4(+) + ATP = CTP + ADP + phosphate + 2 H(+). The protein operates within pyrimidine metabolism; CTP biosynthesis via de novo pathway; CTP from UDP: step 2/2. With respect to regulation, allosterically activated by GTP, when glutamine is the substrate; GTP has no effect on the reaction when ammonia is the substrate. The allosteric effector GTP functions by stabilizing the protein conformation that binds the tetrahedral intermediate(s) formed during glutamine hydrolysis. Inhibited by the product CTP, via allosteric rather than competitive inhibition. Catalyzes the ATP-dependent amination of UTP to CTP with either L-glutamine or ammonia as the source of nitrogen. Regulates intracellular CTP levels through interactions with the four ribonucleotide triphosphates. The protein is CTP synthase of Francisella philomiragia subsp. philomiragia (strain ATCC 25017 / CCUG 19701 / FSC 153 / O#319-036).